The chain runs to 158 residues: NKG2-F type II integral membrane protein (158 aa).

Polar residues predominate over residues 1-12; the sequence is MNKQRGTYSEVS. The tract at residues 1–30 is disordered; it reads MNKQRGTYSEVSLAQDPKRQQRKLKGNKSS. The Cytoplasmic segment spans residues 1-74; the sequence is MNKQRGTYSE…LPPPERLTAE (74 aa). The chain crosses the membrane as a helical span at residues 75 to 95; the sequence is VLGIICIVLMATVLKTIVLIP. At 96–158 the chain is on the extracellular side; the sequence is CIGVLEQNNF…VLQRTLICFL (63 aa).

In terms of assembly, can form disulfide-bonded heterodimer with CD94. In terms of tissue distribution, natural killer cells.

It is found in the membrane. Its function is as follows. May play a role as a receptor for the recognition of MHC class I HLA-E molecules by NK cells. This Pan troglodytes (Chimpanzee) protein is NKG2-F type II integral membrane protein (KLRC4).